We begin with the raw amino-acid sequence, 632 residues long: MAU2 chromatid cohesion factor homolog (632 aa).

TPR repeat units lie at residues 453-486 and 493-526; these read GGFY…ANAE and SCSL…ASKI.

This sequence belongs to the SCC4/mau-2 family. In terms of assembly, interacts with Nipped-B to form the cohesin loading complex.

The protein localises to the nucleus. It localises to the nucleoplasm. Functionally, required for association of the cohesin complex with chromatin during interphase. Plays a role in sister chromatid cohesion and normal progression through prometaphase. In Drosophila erecta (Fruit fly), this protein is MAU2 chromatid cohesion factor homolog.